The primary structure comprises 246 residues: Octanoyltransferase (246 aa).

The BPL/LPL catalytic domain occupies 54-240 (DPPPEAVWLL…CLEPNADAAI (187 aa)). Residues 96-103 (RGGEVTHH), 163-165 (AIG), and 176-178 (GVA) each bind substrate. Cys-194 functions as the Acyl-thioester intermediate in the catalytic mechanism.

Belongs to the LipB family.

It is found in the cytoplasm. The enzyme catalyses octanoyl-[ACP] + L-lysyl-[protein] = N(6)-octanoyl-L-lysyl-[protein] + holo-[ACP] + H(+). It participates in protein modification; protein lipoylation via endogenous pathway; protein N(6)-(lipoyl)lysine from octanoyl-[acyl-carrier-protein]: step 1/2. Catalyzes the transfer of endogenously produced octanoic acid from octanoyl-acyl-carrier-protein onto the lipoyl domains of lipoate-dependent enzymes. Lipoyl-ACP can also act as a substrate although octanoyl-ACP is likely to be the physiological substrate. The protein is Octanoyltransferase of Synechococcus sp. (strain WH7803).